The primary structure comprises 428 residues: 3-phosphoshikimate 1-carboxyvinyltransferase (428 aa).

The 3-phosphoshikimate site is built by lysine 20, serine 21, and arginine 25. A phosphoenolpyruvate-binding site is contributed by lysine 20. Phosphoenolpyruvate-binding residues include glycine 92 and arginine 120. Residues serine 166, glutamine 168, aspartate 314, and lysine 341 each coordinate 3-phosphoshikimate. Phosphoenolpyruvate is bound at residue glutamine 168. The active-site Proton acceptor is the aspartate 314. Residues arginine 345 and arginine 387 each coordinate phosphoenolpyruvate.

This sequence belongs to the EPSP synthase family. As to quaternary structure, monomer.

The protein resides in the cytoplasm. The catalysed reaction is 3-phosphoshikimate + phosphoenolpyruvate = 5-O-(1-carboxyvinyl)-3-phosphoshikimate + phosphate. Its pathway is metabolic intermediate biosynthesis; chorismate biosynthesis; chorismate from D-erythrose 4-phosphate and phosphoenolpyruvate: step 6/7. Catalyzes the transfer of the enolpyruvyl moiety of phosphoenolpyruvate (PEP) to the 5-hydroxyl of shikimate-3-phosphate (S3P) to produce enolpyruvyl shikimate-3-phosphate and inorganic phosphate. This is 3-phosphoshikimate 1-carboxyvinyltransferase from Listeria monocytogenes serovar 1/2a (strain ATCC BAA-679 / EGD-e).